The sequence spans 529 residues: UDP-glucuronosyltransferase 2B33 (529 aa).

Positions 1-24 (MSVKWTSIILLIQLSFYFSSGSCG) are cleaved as a signal peptide. N-linked (GlcNAc...) asparagine glycans are attached at residues asparagine 67 and asparagine 68. The helical transmembrane segment at 494 to 514 (IGFLLACVATVIFIIMKCCLF) threads the bilayer.

Belongs to the UDP-glycosyltransferase family.

It is found in the microsome membrane. The protein resides in the endoplasmic reticulum membrane. It catalyses the reaction glucuronate acceptor + UDP-alpha-D-glucuronate = acceptor beta-D-glucuronoside + UDP + H(+). Functionally, UDPGTs are of major importance in the conjugation and subsequent elimination of potentially toxic xenobiotics and endogenous compounds. This isozyme has glucuronidating capacity on estriol and does not catalyze the glucuronidation of beta-estradiol. Capable of conjugating 4-hydroxyestrone, androsterone, diclofenac, and hyodeoxycholic acid. This chain is UDP-glucuronosyltransferase 2B33 (UGT2B33), found in Macaca mulatta (Rhesus macaque).